We begin with the raw amino-acid sequence, 255 residues long: Staphylococcal secretory antigen ssaA1 (255 aa).

A signal peptide spans 1–26; the sequence is MKKIVTATIATAGLATIAFAGHDAQA. Tandem repeats lie at residues 75 to 78, 88 to 91, and 98 to 101. The tract at residues 75–101 is 3 X 4 AA repeats of Y-N-N-Y; the sequence is YNNYNTYSYNNASYNNYYNHSYQYNNY. In terms of domain architecture, Peptidase C51 spans 134–255; sequence AAPSSNGRSI…NQAGSYNFIH (122 aa).

The protein localises to the secreted. Not known; immunogenic protein. This is Staphylococcal secretory antigen ssaA1 (ssaA1) from Staphylococcus aureus (strain MW2).